A 403-amino-acid polypeptide reads, in one-letter code: S-adenosylmethionine:tRNA ribosyltransferase-isomerase (403 aa).

Belongs to the QueA family. As to quaternary structure, monomer.

The protein resides in the cytoplasm. It carries out the reaction 7-aminomethyl-7-carbaguanosine(34) in tRNA + S-adenosyl-L-methionine = epoxyqueuosine(34) in tRNA + adenine + L-methionine + 2 H(+). It participates in tRNA modification; tRNA-queuosine biosynthesis. Its function is as follows. Transfers and isomerizes the ribose moiety from AdoMet to the 7-aminomethyl group of 7-deazaguanine (preQ1-tRNA) to give epoxyqueuosine (oQ-tRNA). The polypeptide is S-adenosylmethionine:tRNA ribosyltransferase-isomerase (Psychrobacter arcticus (strain DSM 17307 / VKM B-2377 / 273-4)).